The following is a 700-amino-acid chain: Elongation factor G (700 aa).

The region spanning 8-290 (ERYRNIGISA…AVVEYLPAPT (283 aa)) is the tr-type G domain. Residues 17–24 (AHIDAGKT), 88–92 (DTPGH), and 142–145 (NKMD) contribute to the GTP site.

Belongs to the TRAFAC class translation factor GTPase superfamily. Classic translation factor GTPase family. EF-G/EF-2 subfamily.

Its subcellular location is the cytoplasm. Functionally, catalyzes the GTP-dependent ribosomal translocation step during translation elongation. During this step, the ribosome changes from the pre-translocational (PRE) to the post-translocational (POST) state as the newly formed A-site-bound peptidyl-tRNA and P-site-bound deacylated tRNA move to the P and E sites, respectively. Catalyzes the coordinated movement of the two tRNA molecules, the mRNA and conformational changes in the ribosome. This is Elongation factor G from Haemophilus influenzae (strain PittEE).